A 302-amino-acid polypeptide reads, in one-letter code: Sulfate adenylyltransferase subunit 2 (302 aa).

The protein belongs to the PAPS reductase family. CysD subfamily. Heterodimer composed of CysD, the smaller subunit, and CysN.

The catalysed reaction is sulfate + ATP + H(+) = adenosine 5'-phosphosulfate + diphosphate. Its pathway is sulfur metabolism; hydrogen sulfide biosynthesis; sulfite from sulfate: step 1/3. In terms of biological role, with CysN forms the ATP sulfurylase (ATPS) that catalyzes the adenylation of sulfate producing adenosine 5'-phosphosulfate (APS) and diphosphate, the first enzymatic step in sulfur assimilation pathway. APS synthesis involves the formation of a high-energy phosphoric-sulfuric acid anhydride bond driven by GTP hydrolysis by CysN coupled to ATP hydrolysis by CysD. In Proteus mirabilis (strain HI4320), this protein is Sulfate adenylyltransferase subunit 2.